The sequence spans 338 residues: NADPH dehydrogenase (338 aa).

22-25 (SPMC) contributes to the FMN binding site. Y27 provides a ligand contact to substrate. Residues A59 and Q101 each contribute to the FMN site. 163–166 (HAAH) contributes to the substrate binding site. FMN-binding positions include R214 and 306-307 (GR).

This sequence belongs to the NADH:flavin oxidoreductase/NADH oxidase family. NamA subfamily. Homotetramer. Requires FMN as cofactor.

It catalyses the reaction A + NADPH + H(+) = AH2 + NADP(+). Its function is as follows. Catalyzes the reduction of the double bond of an array of alpha,beta-unsaturated aldehydes and ketones. It also reduces the nitro group of nitroester and nitroaromatic compounds. It could have a role in detoxification processes. This is NADPH dehydrogenase from Listeria monocytogenes serovar 1/2a (strain ATCC BAA-679 / EGD-e).